We begin with the raw amino-acid sequence, 396 residues long: Elongation factor Tu (396 aa).

In terms of domain architecture, tr-type G spans 10–206 (KPHCNIGTIG…QVDAYIPQPE (197 aa)). A G1 region spans residues 19-26 (GHVDHGKT). Residue 19–26 (GHVDHGKT) coordinates GTP. T26 provides a ligand contact to Mg(2+). Residues 60 to 64 (GITIS) are G2. The segment at 81–84 (DCPG) is G3. Residues 81 to 85 (DCPGH) and 136 to 139 (NKCD) each bind GTP. The segment at 136 to 139 (NKCD) is G4. A G5 region spans residues 174–176 (SAL).

Belongs to the TRAFAC class translation factor GTPase superfamily. Classic translation factor GTPase family. EF-Tu/EF-1A subfamily. In terms of assembly, monomer.

The protein resides in the cytoplasm. The catalysed reaction is GTP + H2O = GDP + phosphate + H(+). In terms of biological role, GTP hydrolase that promotes the GTP-dependent binding of aminoacyl-tRNA to the A-site of ribosomes during protein biosynthesis. This is Elongation factor Tu from Rhodopseudomonas palustris (strain ATCC BAA-98 / CGA009).